The sequence spans 111 residues: Secreted RxLR effector protein 159 (111 aa).

The signal sequence occupies residues 1-21; sequence MRGAYYVAIAFLVAASSRTAA. Residues 50–71 carry the RxLR-dEER motif; the sequence is RVLRGSRDLKDKLAVYANDEQR. N-linked (GlcNAc...) asparagine glycosylation occurs at Asn81.

It belongs to the RxLR effector family.

The protein localises to the secreted. The protein resides in the host nucleus. It is found in the host cytoplasm. Secreted effector that completely suppresses the host cell death induced by cell death-inducing proteins. This is Secreted RxLR effector protein 159 from Plasmopara viticola (Downy mildew of grapevine).